A 367-amino-acid polypeptide reads, in one-letter code: Alanine racemase (367 aa).

Catalysis depends on Lys40, which acts as the Proton acceptor; specific for D-alanine. Residue Lys40 is modified to N6-(pyridoxal phosphate)lysine. Arg136 is a binding site for substrate. Residue Tyr263 is the Proton acceptor; specific for L-alanine of the active site. Met310 contacts substrate.

Belongs to the alanine racemase family. It depends on pyridoxal 5'-phosphate as a cofactor.

The catalysed reaction is L-alanine = D-alanine. Its pathway is amino-acid biosynthesis; D-alanine biosynthesis; D-alanine from L-alanine: step 1/1. In terms of biological role, catalyzes the interconversion of L-alanine and D-alanine. May also act on other amino acids. This chain is Alanine racemase (alr), found in Streptococcus thermophilus (strain ATCC BAA-250 / LMG 18311).